Reading from the N-terminus, the 81-residue chain is Cytotoxin 2 (81 aa).

The N-terminal stretch at 1–21 (MKTLLLTLVVVTIVCLDLGYT) is a signal peptide. 4 cysteine pairs are disulfide-bonded: Cys24–Cys42, Cys35–Cys59, Cys63–Cys74, and Cys75–Cys80.

The protein belongs to the three-finger toxin family. Short-chain subfamily. Type IA cytotoxin sub-subfamily. As to quaternary structure, monomer in solution; Homodimer and oligomer in the presence of negatively charged lipids forming a pore with a size ranging between 20 and 30 Angstroms. As to expression, expressed by the venom gland.

The protein localises to the secreted. It localises to the target cell membrane. Its function is as follows. Basic protein that binds to cell membrane and depolarizes cardiomyocytes. It also shows lytic activities, but 2-fold less important than that of CTX-A4. It binds to the integrin alpha-V/beta-3 (ITGAV/ITGB3) with a moderate affinity. It may interact with sulfatides in the cell membrane which induces pore formation and cell internalization and is responsible for cytotoxicity in cardiomyocytes. It may also target the mitochondrial membrane and induce mitochondrial swelling and fragmentation. This chain is Cytotoxin 2, found in Naja atra (Chinese cobra).